A 206-amino-acid polypeptide reads, in one-letter code: Large ribosomal subunit protein uL4 (206 aa).

The segment at 44-87 (KRQGTHATKTRGMKRGGGAKPWRQKGTGRARAGSTRSPLWRGGG) is disordered.

It belongs to the universal ribosomal protein uL4 family. Part of the 50S ribosomal subunit.

One of the primary rRNA binding proteins, this protein initially binds near the 5'-end of the 23S rRNA. It is important during the early stages of 50S assembly. It makes multiple contacts with different domains of the 23S rRNA in the assembled 50S subunit and ribosome. Its function is as follows. Forms part of the polypeptide exit tunnel. This Maridesulfovibrio salexigens (strain ATCC 14822 / DSM 2638 / NCIMB 8403 / VKM B-1763) (Desulfovibrio salexigens) protein is Large ribosomal subunit protein uL4.